The following is a 760-amino-acid chain: Xaa-Pro dipeptidyl-peptidase (760 aa).

Residues Ser349, Asp469, and His499 each act as charge relay system in the active site.

It belongs to the peptidase S15 family. In terms of assembly, homodimer.

The protein localises to the cytoplasm. It carries out the reaction Hydrolyzes Xaa-Pro-|- bonds to release unblocked, N-terminal dipeptides from substrates including Ala-Pro-|-p-nitroanilide and (sequentially) Tyr-Pro-|-Phe-Pro-|-Gly-Pro-|-Ile.. Functionally, removes N-terminal dipeptides sequentially from polypeptides having unsubstituted N-termini provided that the penultimate residue is proline. The protein is Xaa-Pro dipeptidyl-peptidase of Streptococcus pyogenes serotype M1.